We begin with the raw amino-acid sequence, 89 residues long: Sodium channel toxin To13 (89 aa).

Positions 1-18 (MKTLFLIITSFILLEVEG) are cleaved as a signal peptide. The region spanning 20–87 (KNGYPRDSKG…TWKNKEPKCK (68 aa)) is the LCN-type CS-alpha/beta domain. Cystine bridges form between C30–C86, C34–C60, C45–C67, and C49–C69.

It belongs to the long (4 C-C) scorpion toxin superfamily. Sodium channel inhibitor family. In terms of tissue distribution, expressed by the venom gland.

It localises to the secreted. Inhibits voltage-gated sodium channels (Nav). This Tityus obscurus (Amazonian scorpion) protein is Sodium channel toxin To13.